The sequence spans 639 residues: ATP-dependent RNA helicase DDX51 (639 aa).

Positions 1 to 131 (MALFHIARYA…QEDVQRPPAP (131 aa)) are disordered. Ala2 carries the N-acetylalanine modification. A compositionally biased stretch (basic and acidic residues) spans 24 to 48 (AGSRARVLLERLQNRARERQQREPE). Residues 50 to 63 (ETTGTAGEGEAAAA) are compositionally biased toward low complexity. The segment covering 64 to 76 (GKRRRRPRRRRRV) has biased composition (basic residues). Residue Ser79 is modified to Phosphoserine. A compositionally biased stretch (basic and acidic residues) spans 94–105 (ADKDVDAGRGEE). The short motif at 193–201 (YFPVQAAVI) is the Q motif element. A Helicase ATP-binding domain is found at 215-424 (GRGGYQPSDL…RLGLYQPRLF (210 aa)). 228-235 (APTGSGKT) is a binding site for ATP. The short motif at 343 to 346 (DEAD) is the DEAD box element. Ser432 carries the post-translational modification Phosphoserine. The Helicase C-terminal domain occupies 467–615 (IVLHLVLRMS…EIPRKLLQPL (149 aa)).

The protein belongs to the DEAD box helicase family. DDX51/DBP6 subfamily.

Its subcellular location is the nucleus. The protein resides in the nucleolus. It carries out the reaction ATP + H2O = ADP + phosphate + H(+). In terms of biological role, ATP-binding RNA helicase involved in the biogenesis of 60S ribosomal subunits. The sequence is that of ATP-dependent RNA helicase DDX51 (Ddx51) from Mus musculus (Mouse).